Here is a 352-residue protein sequence, read N- to C-terminus: RNA-binding protein lark (352 aa).

2 RRM domains span residues 7–77 and 86–156; these read FKLF…AAKS and TKIF…VSTS. The CCHC-type zinc finger occupies 168–185; sequence EQCYRCGRSGHWSKECPR. Disordered stretches follow at residues 187–228 and 254–352; these read YGSA…LRDR and YQTS…YAPY. Residues S198 and S201 each carry the phosphoserine modification. Pro residues-rich tracts occupy residues 214 to 224 and 262 to 277; these read PYPPPPPPPPF and FPPP…PLPP. Positions 279–288 are enriched in polar residues; that stretch reads LSGSLRSCSV. Residues S315 and S325 each carry the phosphoserine modification. The span at 320-334 shows a compositional bias: basic and acidic residues; that stretch reads GYEDFSRDAFDERMI.

As to expression, expressed in the CNS and in CCAP neurons of the ventral nervous system (VNS), which control insect ecdysis.

It is found in the cytoplasm. The protein localises to the nucleus. In terms of biological role, essential RNA-binding protein. May be required for circadian repression of eclosion. Also essential for nurse cell dumping during oogenesis, the process whereby the cytoplasmic contents of nurse cells are transferred to the oocyte late in it's development. The polypeptide is RNA-binding protein lark (lark) (Drosophila melanogaster (Fruit fly)).